The chain runs to 238 residues: NAD-dependent protein deacylase (238 aa).

The region spanning 1–237 is the Deacetylase sirtuin-type domain; that stretch reads MRGIMKVFVL…PAWVERLLAR (237 aa). 12–31 lines the NAD(+) pocket; that stretch reads GAGVSAESGLGTFRDKDGVW. Substrate contacts are provided by tyrosine 56 and arginine 59. An NAD(+)-binding site is contributed by 94-97; sequence QNVD. Histidine 112 serves as the catalytic Proton acceptor. Zn(2+) is bound by residues cysteine 120, cysteine 123, cysteine 139, and cysteine 142. NAD(+) is bound by residues 179 to 181, 205 to 207, and alanine 223; these read GTS and NLE.

It belongs to the sirtuin family. Class III subfamily. The cofactor is Zn(2+).

It localises to the cytoplasm. It carries out the reaction N(6)-acetyl-L-lysyl-[protein] + NAD(+) + H2O = 2''-O-acetyl-ADP-D-ribose + nicotinamide + L-lysyl-[protein]. It catalyses the reaction N(6)-succinyl-L-lysyl-[protein] + NAD(+) + H2O = 2''-O-succinyl-ADP-D-ribose + nicotinamide + L-lysyl-[protein]. In terms of biological role, NAD-dependent lysine deacetylase and desuccinylase that specifically removes acetyl and succinyl groups on target proteins. Modulates the activities of several proteins which are inactive in their acylated form. In Caulobacter vibrioides (strain ATCC 19089 / CIP 103742 / CB 15) (Caulobacter crescentus), this protein is NAD-dependent protein deacylase.